We begin with the raw amino-acid sequence, 320 residues long: Malate dehydrogenase (320 aa).

Residues 10–15 and aspartate 34 contribute to the NAD(+) site; that span reads GAGQIG. Positions 83 and 89 each coordinate substrate. Residues asparagine 96 and 119-121 each bind NAD(+); that span reads ITN. Substrate-binding residues include asparagine 121 and arginine 152. Histidine 176 serves as the catalytic Proton acceptor.

It belongs to the LDH/MDH superfamily. MDH type 3 family.

The enzyme catalyses (S)-malate + NAD(+) = oxaloacetate + NADH + H(+). Its function is as follows. Catalyzes the reversible oxidation of malate to oxaloacetate. This Methylobacterium radiotolerans (strain ATCC 27329 / DSM 1819 / JCM 2831 / NBRC 15690 / NCIMB 10815 / 0-1) protein is Malate dehydrogenase.